Reading from the N-terminus, the 203-residue chain is MDIMNNLPIPMVVEQTGRGERAFDIYSRLLKERVVFLVGEVNDASANLVVAQLLFLEAENPDQDIHFYINSPGGSVTAGMSIYDTMQFIKPDVSTMVLGQAASMGAVLLAAGAAGKRYALPNSRVMIHQPLGGFRGQASDIDIHAREILFIRERLNQILAKHSGQDLETISRDTERDNFMSAERAQEYGLVDAILTHRESVSA.

Catalysis depends on Ser-103, which acts as the Nucleophile. His-128 is an active-site residue.

The protein belongs to the peptidase S14 family. In terms of assembly, fourteen ClpP subunits assemble into 2 heptameric rings which stack back to back to give a disk-like structure with a central cavity, resembling the structure of eukaryotic proteasomes.

The protein localises to the cytoplasm. It carries out the reaction Hydrolysis of proteins to small peptides in the presence of ATP and magnesium. alpha-casein is the usual test substrate. In the absence of ATP, only oligopeptides shorter than five residues are hydrolyzed (such as succinyl-Leu-Tyr-|-NHMec, and Leu-Tyr-Leu-|-Tyr-Trp, in which cleavage of the -Tyr-|-Leu- and -Tyr-|-Trp bonds also occurs).. Cleaves peptides in various proteins in a process that requires ATP hydrolysis. Has a chymotrypsin-like activity. Plays a major role in the degradation of misfolded proteins. This is ATP-dependent Clp protease proteolytic subunit from Dichelobacter nodosus (strain VCS1703A).